Here is a 99-residue protein sequence, read N- to C-terminus: Malonate decarboxylase acyl carrier protein (99 aa).

An O-(phosphoribosyl dephospho-coenzyme A)serine modification is found at serine 25.

Belongs to the MdcC family. In terms of processing, covalently binds the prosthetic group of malonate decarboxylase.

The protein resides in the cytoplasm. Functionally, subunit of malonate decarboxylase, it is an acyl carrier protein to which acetyl and malonyl thioester residues are bound via a 2'-(5''-phosphoribosyl)-3'-dephospho-CoA prosthetic group and turn over during the catalytic mechanism. The protein is Malonate decarboxylase acyl carrier protein of Pseudomonas fluorescens (strain ATCC BAA-477 / NRRL B-23932 / Pf-5).